Consider the following 494-residue polypeptide: Probable cytosol aminopeptidase (494 aa).

Mn(2+) is bound by residues Lys-260 and Asp-265. Residue Lys-272 is part of the active site. Mn(2+) is bound by residues Asp-283, Asp-342, and Glu-344. Residue Arg-346 is part of the active site.

It belongs to the peptidase M17 family. Requires Mn(2+) as cofactor.

It localises to the cytoplasm. The enzyme catalyses Release of an N-terminal amino acid, Xaa-|-Yaa-, in which Xaa is preferably Leu, but may be other amino acids including Pro although not Arg or Lys, and Yaa may be Pro. Amino acid amides and methyl esters are also readily hydrolyzed, but rates on arylamides are exceedingly low.. It catalyses the reaction Release of an N-terminal amino acid, preferentially leucine, but not glutamic or aspartic acids.. Its function is as follows. Presumably involved in the processing and regular turnover of intracellular proteins. Catalyzes the removal of unsubstituted N-terminal amino acids from various peptides. The chain is Probable cytosol aminopeptidase from Bacillus cereus (strain ATCC 10987 / NRS 248).